Here is a 483-residue protein sequence, read N- to C-terminus: Peroxisomal biogenesis factor 3 (483 aa).

Residues 1 to 14 are Peroxisomal-facing; it reads MTGNRSLVQRHRKK. Residues 15 to 35 form a helical membrane-spanning segment; it reads FVVSSVLFATLFATCAITVYF. The Cytoplasmic portion of the chain corresponds to 36–483; it reads SKRWLYKQHL…SACVYSNFGL (448 aa). Disordered regions lie at residues 119 to 149 and 230 to 253; these read GLSSGMSAMTPAPSVSAKSPQSADTTSVSET and NNLPSEKADPRNSDGTIDTDTRSI. The span at 242 to 253 shows a compositional bias: polar residues; the sequence is SDGTIDTDTRSI.

It belongs to the peroxin-3 family.

The protein localises to the peroxisome membrane. Its function is as follows. Involved in peroxisome biosynthesis. In Kluyveromyces lactis (strain ATCC 8585 / CBS 2359 / DSM 70799 / NBRC 1267 / NRRL Y-1140 / WM37) (Yeast), this protein is Peroxisomal biogenesis factor 3 (PEX3).